Here is a 219-residue protein sequence, read N- to C-terminus: MNKEKAIVVFSGGQDSTTCLFWAKKKYKEVIAVSFDYNQKHKLELDCAKDICKKYNIEHHILDLNLLNQLAPNSLTRQDITVDKSAPKEGVPNSFVDGRNLLFLSFVAVFAKQKGINTIITGVSQSDFSGYPDCRDVFIKSLNVTLNLAMDYEFEIITPLMWINKAETWKMAYDLGVLDIVKEETLTCYNGIKADGCGECPACKLRKKGYWEFEKEYLK.

10–20 is a binding site for ATP; that stretch reads FSGGQDSTTCL. Residues cysteine 188, cysteine 197, cysteine 200, and cysteine 203 each coordinate Zn(2+).

It belongs to the QueC family. In terms of assembly, homodimer. Zn(2+) serves as cofactor.

The catalysed reaction is 7-carboxy-7-deazaguanine + NH4(+) + ATP = 7-cyano-7-deazaguanine + ADP + phosphate + H2O + H(+). It functions in the pathway purine metabolism; 7-cyano-7-deazaguanine biosynthesis. Its function is as follows. Catalyzes the ATP-dependent conversion of 7-carboxy-7-deazaguanine (CDG) to 7-cyano-7-deazaguanine (preQ(0)). This is 7-cyano-7-deazaguanine synthase from Clostridium botulinum (strain ATCC 19397 / Type A).